Consider the following 272-residue polypeptide: Methylsterol monooxygenase 2-1 (272 aa).

A run of 3 helical transmembrane segments spans residues 24–44 (IGSFILHESVFFLSGLPYIFL), 72–94 (LLLYHCCVNLPLMMASYPVFRFM), and 107–127 (VVSAQILFYFIIEDFVFYWGH). The Fatty acid hydroxylase domain occupies 113 to 259 (LFYFIIEDFV…FVYMDWIFGT (147 aa)). A Histidine box-1 motif is present at residues 127–131 (HRILH). Residues 140–144 (HSVHH) carry the Histidine box-2 motif. A run of 2 helical transmembrane segments spans residues 162–182 (ILFLGFATIVGPALTGPHLIT) and 209–229 (NFLPLYGGSLILMWESFAYSA). The Histidine box-3 signature appears at 231–237 (FHDYHHR).

Belongs to the sterol desaturase family. The cofactor is Fe cation. As to expression, strongly expressed in leaves, flowers, siliques and developing seeds.

It is found in the endoplasmic reticulum membrane. The enzyme catalyses 4,4-dimethyl-5alpha-cholest-7-en-3beta-ol + 6 Fe(II)-[cytochrome b5] + 3 O2 + 5 H(+) = 4alpha-carboxy-4beta-methyl-5alpha-cholest-7-ene-3beta-ol + 6 Fe(III)-[cytochrome b5] + 4 H2O. The catalysed reaction is 24-methylidenelophenol + 6 Fe(II)-[cytochrome b5] + 3 O2 + 5 H(+) = 4alpha-carboxy-ergosta-7,24(24(1))-dien-3beta-ol + 6 Fe(III)-[cytochrome b5] + 4 H2O. Functionally, non-heme iron oxygenase involved in sterols biosynthesis by catalyzing the removal of the second methyl group at the C-4 position. 24-ethylidenelophenol and 24-ethyllophenol are the preferred substrates. Together with SMO2-2, required during embryogenesis, probably by maintaining sterols and auxin homeostasis. This is Methylsterol monooxygenase 2-1 from Arabidopsis thaliana (Mouse-ear cress).